Consider the following 242-residue polypeptide: UPF0309 protein Oant_1457 (242 aa).

The 185-residue stretch at 30–214 (AAELITAAAL…AKLVGKGDAP (185 aa)) folds into the SIS domain.

The protein belongs to the UPF0309 family.

The sequence is that of UPF0309 protein Oant_1457 from Brucella anthropi (strain ATCC 49188 / DSM 6882 / CCUG 24695 / JCM 21032 / LMG 3331 / NBRC 15819 / NCTC 12168 / Alc 37) (Ochrobactrum anthropi).